Here is a 275-residue protein sequence, read N- to C-terminus: Sulfate transporter CysZ (275 aa).

Positions methionine 1–alanine 24 are disordered. A compositionally biased stretch (basic and acidic residues) spans proline 13–alanine 24. Helical transmembrane passes span phenylalanine 49 to phenylalanine 69, leucine 93 to isoleucine 113, isoleucine 169 to tryptophan 189, and alanine 232 to valine 252.

It belongs to the CysZ family.

Its subcellular location is the cell inner membrane. In terms of biological role, high affinity, high specificity proton-dependent sulfate transporter, which mediates sulfate uptake. Provides the sulfur source for the cysteine synthesis pathway. The polypeptide is Sulfate transporter CysZ (Pectobacterium atrosepticum (strain SCRI 1043 / ATCC BAA-672) (Erwinia carotovora subsp. atroseptica)).